The sequence spans 207 residues: MSVGADKIISNIKADAQAKADEIISKAKAESEKIIADGEAKAQIEKEQILDSANKQADMKYQQIISEAKVNSRRKELEAREELIEKAFRIASEKIEKLASENSANYVESLKVMIKDASIQVGSTQLEILVREDDVENVKSMIDEVSEYVTKETGNETSFVIGEPIDIIGGAVVKTVDGDVEVKNTIEARMLRYRKHLRSEVAKKLFR.

The protein belongs to the V-ATPase E subunit family. As to quaternary structure, has multiple subunits with at least A(3), B(3), C, D, E, F, H, I and proteolipid K(x).

The protein localises to the cell membrane. In terms of biological role, component of the A-type ATP synthase that produces ATP from ADP in the presence of a proton gradient across the membrane. In Methanosphaera stadtmanae (strain ATCC 43021 / DSM 3091 / JCM 11832 / MCB-3), this protein is A-type ATP synthase subunit E.